A 489-amino-acid polypeptide reads, in one-letter code: Cobyric acid synthase (489 aa).

The GATase cobBQ-type domain maps to 251–444; sequence GLIIAVIRLP…LHGIFANDTF (194 aa). The active-site Nucleophile is Cys-329. His-436 is an active-site residue.

Belongs to the CobB/CobQ family. CobQ subfamily.

It participates in cofactor biosynthesis; adenosylcobalamin biosynthesis. Its function is as follows. Catalyzes amidations at positions B, D, E, and G on adenosylcobyrinic A,C-diamide. NH(2) groups are provided by glutamine, and one molecule of ATP is hydrogenolyzed for each amidation. This Chloroflexus aurantiacus (strain ATCC 29366 / DSM 635 / J-10-fl) protein is Cobyric acid synthase.